Consider the following 85-residue polypeptide: Small ribosomal subunit protein uS17 (85 aa).

It belongs to the universal ribosomal protein uS17 family. In terms of assembly, part of the 30S ribosomal subunit.

Its function is as follows. One of the primary rRNA binding proteins, it binds specifically to the 5'-end of 16S ribosomal RNA. The protein is Small ribosomal subunit protein uS17 of Mycoplasma capricolum subsp. capricolum (strain California kid / ATCC 27343 / NCTC 10154).